The sequence spans 380 residues: MKVLINKNELNKILKKLNNVIVSNNKMKPYHSYLLIEATEKEINFYANNEYFSAKCTLAENIDVLEEGEVIVKGKIFSELINGIKEDIITIQEKDQTLLVKTKKTNINLNTIDKKEFPRIRFNQNVDLKEFDELKIQHSLLTKGLKKIAHAVSTFRESTRKFNGVNFNGSNGKQIFLEASDSYKLSVYEIKQKTDPFNFIVETNLLSFINSFNPEGGDLISIFFRKEHKDDLSTELLIKLDNFLINYTSINESFPRVMQLFDFEPETKVTIQKNELKDALQRILTLAQNERFFLCDMQVTNSHLKINSNVQNIGASLEEVTCLKFEGHKLNIAVNALSLLEHIDSFDTDEIELYFQGSNKYFLISSNNEPELKEILVPSK.

Belongs to the beta sliding clamp family. As to quaternary structure, forms a ring-shaped head-to-tail homodimer around DNA which binds and tethers DNA polymerases and other proteins to the DNA. The DNA replisome complex has a single clamp-loading complex (3 tau and 1 each of delta, delta', psi and chi subunits) which binds 3 Pol III cores (1 core on the leading strand and 2 on the lagging strand) each with a beta sliding clamp dimer. Additional proteins in the replisome are other copies of gamma, psi and chi, Ssb, DNA helicase and RNA primase.

The protein resides in the cytoplasm. Its function is as follows. Confers DNA tethering and processivity to DNA polymerases and other proteins. Acts as a clamp, forming a ring around DNA (a reaction catalyzed by the clamp-loading complex) which diffuses in an ATP-independent manner freely and bidirectionally along dsDNA. Initially characterized for its ability to contact the catalytic subunit of DNA polymerase III (Pol III), a complex, multichain enzyme responsible for most of the replicative synthesis in bacteria; Pol III exhibits 3'-5' exonuclease proofreading activity. The beta chain is required for initiation of replication as well as for processivity of DNA replication. This is Beta sliding clamp (dnaN) from Mycoplasma pneumoniae (strain ATCC 29342 / M129 / Subtype 1) (Mycoplasmoides pneumoniae).